The sequence spans 729 residues: MKIESLDLPDEVKQFYLNSGIMELYPPQAEAVEKGLLEGRNLLAAIPTASGKTLLAELAMLKSILAGGKALYIVPLRALASEKFRRFREFSELGIRVGISTGDYDLRDEGLGVNDIIVATSEKTDSLLRNETVWMQEISVVVADEVHLIDSPDRGPTLEVTLAKLRKMNPSCQILALSATVGNADELAVWLEAELVVSEWRPTELLEGVFFNGTFYCKDREKTVEQSTKDEAVNLALDTLKKDGQCLVFESSRKNCMAFAKKAASTVKKTLSAEDRNALAGIADEILENSETDTSTNLAVCIRSGTAFHHAGLTTPLRELVEDGFRAGRIKLISSTPTLAAGLNLPARRVIIRNYRRYSSEDGMQPIPVLEYKQMAGRAGRPRLDPYGEAVLVAKSYKEFVFLFENYIEANAEDIWSKLGTENALRTHVLSTISNGFARTYDELMDFLEATFFAFQYSNFGLSTVVNECLNFLRQEGMLEKDDALIPTSFGKLVSRLYIDPLSAARIAKGLKGAKSLSELTLLHLVCSTPDMRLLYMRSHDYQDINDYVMAHASEFVKVPSPFDTTEYEWFLGEVKTSLLLLDWIHEKSENEICLKFGTGEGDIHSIADIAEWIMHVTSQLAGLLDLKGAREAAELEKRIHYGAAPELIDLLNIRGIGRVRARKLYEAGFKSSAELAEVDPEKVAALLGPKIADRIFKQIRGRGTSSGIIASEPPEKSPYSGQKTISDY.

Residues Q28 and 46 to 53 (IPTASGKT) contribute to the ATP site. Positions 33 to 199 (EKGLLEGRNL…WLEAELVVSE (167 aa)) constitute a Helicase ATP-binding domain. The short motif at 144–147 (DEVH) is the DEAH box element. A Helicase C-terminal domain is found at 232 to 426 (AVNLALDTLK…SKLGTENALR (195 aa)). Residues 706 to 729 (SSGIIASEPPEKSPYSGQKTISDY) form a disordered region. Over residues 720-729 (YSGQKTISDY) the composition is skewed to polar residues.

The protein belongs to the helicase family. Hel308 subfamily. Monomer.

The catalysed reaction is Couples ATP hydrolysis with the unwinding of duplex DNA by translocating in the 3'-5' direction.. It carries out the reaction ATP + H2O = ADP + phosphate + H(+). Its function is as follows. DNA-dependent ATPase and 3'-5' DNA helicase that may be involved in repair of stalled replication forks. This chain is ATP-dependent DNA helicase Hel308, found in Methanosarcina barkeri (strain Fusaro / DSM 804).